Here is a 418-residue protein sequence, read N- to C-terminus: FK506-binding protein 3 (418 aa).

Disordered regions lie at residues proline 49–phenylalanine 133, serine 172–lysine 273, and leucine 289–threonine 309. Residues tyrosine 61 to glutamate 89 show a composition bias toward acidic residues. Residues lysine 93–serine 103 are compositionally biased toward basic residues. Composition is skewed to acidic residues over residues glutamate 108–phenylalanine 133 and glycine 186–aspartate 224. Positions valine 225–lysine 239 are enriched in basic and acidic residues. Residues proline 251–glutamate 264 show a composition bias toward acidic residues. Positions glycine 332–lysine 418 constitute a PPIase FKBP-type domain.

This sequence belongs to the FKBP-type PPIase family. FKBP3/4 subfamily.

It is found in the nucleus. Its subcellular location is the nucleolus. The enzyme catalyses [protein]-peptidylproline (omega=180) = [protein]-peptidylproline (omega=0). Its activity is regulated as follows. Inhibited by both FK506 and rapamycin. PPIases accelerate the folding of proteins. It catalyzes the cis-trans isomerization of proline imidic peptide bonds in oligopeptides. The polypeptide is FK506-binding protein 3 (FPR3) (Kluyveromyces lactis (strain ATCC 8585 / CBS 2359 / DSM 70799 / NBRC 1267 / NRRL Y-1140 / WM37) (Yeast)).